The sequence spans 361 residues: MAALSLKGVRKSYDGKQHVLHGIDVEIADGEFIVLVGPSGCGKSTLLRMIAGLESVTDGEIAIGDRVVNTLEPKDRDIAMVFQNYALYPHMTVAQNMGYGLKIRGIERATIDSRVAAAAKILELEPLLARRPRELSGGQRQRVAMGRAIVREPSVFLFDEPLSNLDAKLRVQMRLEIQRLHARLATTSVYVTHDQIEAMTLAQRVIVMNRGYAEQIGAPVDVYEKPATVFVAGFIGSPAMNLMHGRLSEDGASFTVAGGGPALPVAGAPGIGREIATGRDWVLGVRPEHMTPQPGVAQATLPVDSCELLGADNLAHGRWGDHDIAVRLPHADRPARGTALAAALPAHRLHFFDPESGKRAG.

The ABC transporter domain maps to 4–235 (LSLKGVRKSY…PATVFVAGFI (232 aa)). 37 to 44 (GPSGCGKS) serves as a coordination point for ATP.

Belongs to the ABC transporter superfamily. sn-glycerol-3-phosphate importer (TC 3.A.1.1.3) family. In terms of assembly, the complex is composed of two ATP-binding proteins (UgpC), two transmembrane proteins (UgpA and UgpE) and a solute-binding protein (UgpB).

It localises to the cell inner membrane. The catalysed reaction is sn-glycerol 3-phosphate(out) + ATP + H2O = sn-glycerol 3-phosphate(in) + ADP + phosphate + H(+). Its function is as follows. Part of the ABC transporter complex UgpBAEC involved in sn-glycerol-3-phosphate (G3P) import. Responsible for energy coupling to the transport system. The polypeptide is sn-glycerol-3-phosphate import ATP-binding protein UgpC (Burkholderia cenocepacia (strain HI2424)).